Consider the following 336-residue polypeptide: Putative bifunctional cytochrome c-type biogenesis protein CcmAE (336 aa).

The interval 1–199 (MLEARDLYCE…ADTVRRLALT (199 aa)) is cytochrome c biogenesis ATP-binding export protein CcmA 2. The 241-residue stretch at 2-242 (LEARDLYCER…VGQRLRVGGM (241 aa)) folds into the ABC transporter domain. Position 34 to 41 (34 to 41 (GGNGAGKT)) interacts with ATP. A cytochrome c-type biogenesis protein CcmE 2 region spans residues 196-336 (LALTTALVLY…PQRVDKDTSS (141 aa)). 2 residues coordinate heme: histidine 307 and tyrosine 311. A disordered region spans residues 307–336 (HDENYTPPEVEKAMQENHRRPQRVDKDTSS).

In the N-terminal section; belongs to the ABC transporter superfamily. CcmA exporter (TC 3.A.1.107) family. The protein in the C-terminal section; belongs to the CcmE/CycJ family.

Its subcellular location is the cell inner membrane. It carries out the reaction heme b(in) + ATP + H2O = heme b(out) + ADP + phosphate + H(+). Functionally, part of the ABC transporter complex CcmAB involved in the biogenesis of c-type cytochromes; once thought to export heme, this seems not to be the case, but its exact role is uncertain. Responsible for energy coupling to the transport system. Its function is as follows. Heme chaperone required for the biogenesis of c-type cytochromes. Transiently binds heme delivered by CcmC and transfers the heme to apo-cytochromes in a process facilitated by CcmF and CcmH. The polypeptide is Putative bifunctional cytochrome c-type biogenesis protein CcmAE (ccmAE) (Salmonella choleraesuis (strain SC-B67)).